The following is a 159-amino-acid chain: Phosphopantetheine adenylyltransferase (159 aa).

Thr10 lines the substrate pocket. Residues 10 to 11 (TF) and His18 each bind ATP. Residues Lys42, Met74, and Arg88 each contribute to the substrate site. ATP contacts are provided by residues 89–91 (GLR), Glu99, and 124–130 (WSFISSS).

The protein belongs to the bacterial CoaD family. Homohexamer. Mg(2+) serves as cofactor.

The protein resides in the cytoplasm. The enzyme catalyses (R)-4'-phosphopantetheine + ATP + H(+) = 3'-dephospho-CoA + diphosphate. Its pathway is cofactor biosynthesis; coenzyme A biosynthesis; CoA from (R)-pantothenate: step 4/5. Its function is as follows. Reversibly transfers an adenylyl group from ATP to 4'-phosphopantetheine, yielding dephospho-CoA (dPCoA) and pyrophosphate. The sequence is that of Phosphopantetheine adenylyltransferase from Salmonella arizonae (strain ATCC BAA-731 / CDC346-86 / RSK2980).